The following is a 391-amino-acid chain: Multidrug resistance protein MdtL (391 aa).

12 helical membrane-spanning segments follow: residues 4–24 (FLIC…MYLV), 42–62 (IAFS…GKVA), 69–89 (PVAI…SLAE), 93–113 (LFLA…VVAF), 131–151 (LLNG…HLIM), 158–178 (SLFW…LFIL), 203–222 (FFLS…LTFV), 245–265 (ALTA…LGIF), 269–289 (TLMI…AVSP), 293–313 (VSLF…GVAM), 331–351 (LGIA…VVGI), and 356–376 (MLIG…MFVA).

It belongs to the major facilitator superfamily. DHA1 family. MdtL (TC 2.A.1.2.22) subfamily.

It localises to the cell inner membrane. Confers resistance to chloramphenicol. This chain is Multidrug resistance protein MdtL, found in Escherichia coli O9:H4 (strain HS).